A 91-amino-acid polypeptide reads, in one-letter code: Acylphosphatase (91 aa).

One can recognise an Acylphosphatase-like domain in the interval 3–89 (TLLVRISGKV…PDQPGFSQKP (87 aa)). Active-site residues include arginine 18 and asparagine 36.

The protein belongs to the acylphosphatase family.

The enzyme catalyses an acyl phosphate + H2O = a carboxylate + phosphate + H(+). The sequence is that of Acylphosphatase (acyP) from Rhodospirillum rubrum (strain ATCC 11170 / ATH 1.1.1 / DSM 467 / LMG 4362 / NCIMB 8255 / S1).